A 372-amino-acid chain; its full sequence is Innexin shaking-B (372 aa).

Topologically, residues 1–21 (MLDIFRGLKNLVKVSHVKTDS) are cytoplasmic. Residues 22–42 (IVFRLHYSITVMILMSFSLII) traverse the membrane as a helical segment. The Extracellular portion of the chain corresponds to 43–110 (TTRQYVGNPI…PADKKHYKYY (68 aa)). A helical membrane pass occupies residues 111-131 (QWVCFCLFFQAILFYTPRWLW). Residues 132–182 (KSWEGGKIHALIMDLDIGICSEAEKKQKKKLLLDYLWENLRYHNWWAYRYY) lie on the Cytoplasmic side of the membrane. Residues 183-203 (VCELLALINVIGQMFLMNRFF) traverse the membrane as a helical segment. The Extracellular portion of the chain corresponds to 204–267 (DGEFITFGLK…ILPLNVVNEK (64 aa)). A helical membrane pass occupies residues 268–288 (IYIFLWFWFILLTFLTLLTLI). Residues 289–372 (YRVVIIFSPR…PGLKGEIQDA (84 aa)) lie on the Cytoplasmic side of the membrane.

It belongs to the pannexin family. Monomer (isoform Lethal). In terms of tissue distribution, isoform Neural is expressed in synapses of giant fibers (GF), in a large thoracic cell in location of postsynaptic target and optic lobe lamina and medulla. Isoform Lethal is expressed in embryonic mesodermal derivatives. During metamorphosis, both isoforms are dynamically expressed in pupal nervous system.

It is found in the cell membrane. It localises to the cell junction. Its subcellular location is the gap junction. Its function is as follows. Structural component of the gap junctions at electrical synapses in distal and mid-depth levels in the lamina. Isoform Lethal forms voltage sensitive intercellular channels through homotypic interactions. The protein is Innexin shaking-B (shakB) of Drosophila melanogaster (Fruit fly).